Reading from the N-terminus, the 1325-residue chain is RIMS-binding protein 2 (1325 aa).

The disordered stretch occupies residues 153–181 (TFLSKSRSDTPRCRFDSDMDNDQNSNTSK). Residues 158–169 (SRSDTPRCRFDS) are compositionally biased toward basic and acidic residues. In terms of domain architecture, SH3 1 spans 186 to 253 (GKVHLCIARY…PSNFVDFVQD (68 aa)). 3 Fibronectin type-III domains span residues 315–408 (VPYP…GKDV), 411–493 (APSN…KKEA), and 507–608 (PPQD…VPPS). Disordered stretches follow at residues 601 to 778 (SDLL…GSDL), 988 to 1010 (DLGS…KKYE), and 1040 to 1090 (AAGP…SRPM). The span at 627-641 (ETKEEHLGPHLKIDE) shows a compositional bias: basic and acidic residues. Over residues 664-676 (FPSSLQGRRSPSP) the composition is skewed to polar residues. Positions 696–716 (MAREAAQRVAESNRMERRSVF) are enriched in basic and acidic residues. Positions 717–727 (SERSNAAQYAN) are enriched in polar residues. Composition is skewed to basic and acidic residues over residues 763-774 (CHGEDYHTESSR) and 996-1010 (PRSE…KKYE). SH3 domains lie at 1121 to 1189 (ISTR…EIQA) and 1225 to 1292 (VSTR…EVPD).

This sequence belongs to the RIMBP family. Interacts with RIMS1, RIMS2, CACNA1D and CACNA1B, and potentially with other Ca(2+) channel alpha-1 isoforms. In terms of tissue distribution, brain, cochlea and retina.

The protein resides in the cell membrane. It is found in the synapse. Plays a role in the synaptic transmission as bifunctional linker that interacts simultaneously with RIMS1, RIMS2, CACNA1D and CACNA1B. This Gallus gallus (Chicken) protein is RIMS-binding protein 2 (RIMBP2).